The sequence spans 269 residues: Staphylococcal secretory antigen ssaA2 (269 aa).

The signal sequence occupies residues 1-27 (MKKIATATIATAGFATIAIASGNQAHA). 7 tandem repeats follow at residues 83–85 (YNN), 88–90 (YNN), 91–93 (YNN), 97–99 (YNN), 103–105 (YNN), 106–108 (YSN), and 115–117 (YNN). Positions 83–115 (YNNYSYNNYNNGYSYNNYSRYNNYSNNNQSYNY) are 7 X 3 AA repeats of Y-[NS]-N. The Peptidase C51 domain maps to 148 to 269 (MAPSSNGRSI…SQAAGYNFIH (122 aa)).

It is found in the secreted. Functionally, not known; immunogenic protein. The chain is Staphylococcal secretory antigen ssaA2 (ssaA2) from Staphylococcus aureus (strain MRSA252).